The following is a 253-amino-acid chain: MTTANIIDLSGNSKGEIALPEVFSEIFRPDLIKKAVLSAQANRLQPYGTKLYAGMQTSAHSWGSGRGVAQVPRISNGSRVARIPQAVGGRRAHPPKTETDRTEKINKKEKRLAVRSAIAATIDADLVKARGHKFTAEVPFVADDAIEGLVKIKEVISFLQAAGLYDDIIRAKEGKHIRAGKGKRRGRKYKNRKSVLIVTGEESLLSKAANNLPGVDVATVTALNAELLAPGTHAGRLTVWTQSAITNMEGMFL.

It belongs to the universal ribosomal protein uL4 family. Part of the 50S ribosomal subunit.

In terms of biological role, one of the primary rRNA binding proteins, this protein initially binds near the 5'-end of the 23S rRNA. It is important during the early stages of 50S assembly. It makes multiple contacts with different domains of the 23S rRNA in the assembled 50S subunit and ribosome. Its function is as follows. Forms part of the polypeptide exit tunnel. The protein is Large ribosomal subunit protein uL4 of Methanococcoides burtonii (strain DSM 6242 / NBRC 107633 / OCM 468 / ACE-M).